We begin with the raw amino-acid sequence, 81 residues long: Mipartoxin-2 (81 aa).

Positions 1 to 21 (MKTLLLTLVVVTIVCLDLGNS) are cleaved as a signal peptide. 4 disulfides stabilise this stretch: Cys24–Cys42, Cys35–Cys61, Cys65–Cys73, and Cys74–Cys79.

The protein belongs to the three-finger toxin family. Short-chain subfamily. As to expression, expressed by the venom gland.

It localises to the secreted. Functionally, snake venom neurotoxin that blocks neuromuscular transmission, presenting a postsynaptic action through the nicotinic acetylcholine receptor (nAChR). Has no cytotoxic activity. In Micrurus mipartitus (Red-tailed coral snake), this protein is Mipartoxin-2.